A 169-amino-acid chain; its full sequence is Der GTPase-activating protein YihI (169 aa).

2 disordered regions span residues 1–99 and 146–169; these read MKPS…QAEL and SYDD…LRGN. The span at 10–19 shows a compositional bias: basic residues; it reads SKGHAKARRK. Basic and acidic residues predominate over residues 20–30; the sequence is TREELDQEARD. Over residues 31-40 the composition is skewed to basic residues; sequence RKRQKKRRGH. A compositionally biased stretch (polar residues) spans 49–58; sequence GNTTSGSKGQ. The segment covering 147–159 has biased composition (acidic residues); it reads YDDDEEEEEDEKQ. The segment covering 160–169 has biased composition (basic and acidic residues); it reads EDMMRLLRGN.

It belongs to the YihI family. Interacts with Der.

Its function is as follows. A GTPase-activating protein (GAP) that modifies Der/EngA GTPase function. May play a role in ribosome biogenesis. The protein is Der GTPase-activating protein YihI of Escherichia coli O81 (strain ED1a).